The following is a 3284-amino-acid chain: Location of vulva defective 1 (3284 aa).

The first 21 residues, 1–21, serve as a signal peptide directing secretion; that stretch reads MKKSNFFVLLLLAISAIQIDG. Disordered regions lie at residues 226–326, 350–505, 623–702, 827–926, and 1043–1216; these read ESTS…ITST, TTML…GTNP, VASS…ADST, STSE…ASTE, and TTTE…SLAT. 2 stretches are compositionally biased toward low complexity: residues 227 to 326 and 350 to 500; these read STST…ITST and TTML…TTSS. A compositionally biased stretch (low complexity) spans 827-913; it reads STSEVTSTTS…PSDSSSASDS (87 aa). Residues 914 to 926 are compositionally biased toward polar residues; sequence MRTTTVDPDASTE. A compositionally biased stretch (low complexity) spans 1043-1057; sequence TTTETPPTTVSSSDD. The segment covering 1060–1078 has biased composition (gly residues); that stretch reads GKTGGTGATGGTGGTGSGG. The segment covering 1079–1104 has biased composition (low complexity); the sequence is SATTLSTGDAVRSTTSGSGSGQSSTG. Residues 1105–1127 show a composition bias toward gly residues; it reads SGAGGSGTTASGSGSGGSSGTGS. The segment covering 1128–1138 has biased composition (polar residues); it reads DGVNSGKTTAL. Residues 1163-1192 show a composition bias toward low complexity; sequence GSGSDSNGSSGVSTKSSSGSDTSGSSDSSG. A compositionally biased stretch (polar residues) spans 1197–1216; the sequence is FSATAQPSTRTTKTRSSLAT. The region spanning 2064–2227 is the GAIN-B domain; that stretch reads WNNSLQVEII…SVGAFNPTID (164 aa). Cys2181 and Cys2209 are joined by a disulfide. Residues 2181-2227 are GPS; the sequence is CYFYQKTSDVFNSEGMYPSDGQGMQFVNCSTDHLTMFSVGAFNPTID. The helical transmembrane segment at 2245-2265 threads the bilayer; sequence VMIAAVFMLVVYGCLTINAII. The PLAT domain maps to 2288–2411; sequence YMYVIAVETG…GDGETERLAR (124 aa). Helical transmembrane passes span 2453–2473, 2496–2516, 2557–2577, 2592–2612, 2672–2692, 2945–2965, 2994–3014, 3043–3063, 3089–3109, and 3144–3164; these read DYSV…ITIL, IAFG…HILL, IIVF…MSLM, LILW…FLIL, LFIT…MVML, MLYI…YLYG, WNFM…AYTI, WEIV…CKMI, FGIA…AVLG, and FAFV…LQLY.

It belongs to the polycystin family. In terms of assembly, interacts (via PLAT domain) with atp-2 (via N-terminus) and with kin-10 (via C-terminus). Interacts (via C-terminus) with isoform a of stam-1/pqn-19 (via C-terminus). Autoproteolytically processed at the GPS region of the GAIN-B domain; this cleavage modulates receptor activity. In terms of tissue distribution, exclusively expressed in a subset of three categories of adult male sensory neurons: ray neurons, hook neurons and head cephalic (CEM) neurons.

The protein localises to the membrane. It localises to the cell projection. The protein resides in the cilium. In terms of biological role, required for two aspects of male mating behavior: response to hermaphrodite contact and vulva location. Acts in the same pathway as pkd-2 and atp-2 in response behavior. May be required for ciliary targeting of pkd-2. In Caenorhabditis elegans, this protein is Location of vulva defective 1 (lov-1).